Here is a 465-residue protein sequence, read N- to C-terminus: Cystathionine beta-lyase (465 aa).

The residue at position 213 (Lys213) is an N6-(pyridoxal phosphate)lysine.

It belongs to the trans-sulfuration enzymes family. It depends on pyridoxal 5'-phosphate as a cofactor.

The protein localises to the cytoplasm. Its subcellular location is the nucleus. It carries out the reaction L,L-cystathionine + H2O = L-homocysteine + pyruvate + NH4(+). The catalysed reaction is an S-substituted L-cysteine + H2O = a thiol + pyruvate + NH4(+). It participates in amino-acid biosynthesis; L-methionine biosynthesis via de novo pathway; L-homocysteine from L-cystathionine: step 1/1. In Saccharomyces cerevisiae (strain ATCC 204508 / S288c) (Baker's yeast), this protein is Cystathionine beta-lyase (STR3).